The primary structure comprises 200 residues: Ribonuclease HII (200 aa).

Residues 6–200 form the RNase H type-2 domain; it reads ESIAGVDEVG…KLFAVHGSLT (195 aa). The a divalent metal cation site is built by D12, E13, and D108.

This sequence belongs to the RNase HII family. Requires Mn(2+) as cofactor. Mg(2+) is required as a cofactor.

Its subcellular location is the cytoplasm. It catalyses the reaction Endonucleolytic cleavage to 5'-phosphomonoester.. Its function is as follows. Endonuclease that specifically degrades the RNA of RNA-DNA hybrids. The protein is Ribonuclease HII of Prochlorococcus marinus (strain MIT 9303).